Consider the following 85-residue polypeptide: Cysteine-rich venom protein 1 (85 aa).

An N-terminal signal peptide occupies residues 1–21 (MCRYALIVLVVVVVATNLSEA). Cystine bridges form between cysteine 29–cysteine 63, cysteine 38–cysteine 59, cysteine 42–cysteine 53, cysteine 46–cysteine 84, and cysteine 65–cysteine 78. In terms of domain architecture, TIL spans 29-84 (CEPNRIYKTCGPACPPTCEDPDPDCNETPQCKAGCFCIPGLIENMKGGNCISPSLC).

It belongs to the serine protease inhibitor-like (TIL domain-containing) family. Expressed by the venom gland.

Its subcellular location is the secreted. Functionally, may be a phenoloxidase inhibitor that stabilizes or inhibits venom phenoloxidase while it is stored in the venom sac. This Pimpla hypochondriaca (Parasitoid wasp) protein is Cysteine-rich venom protein 1.